The sequence spans 1071 residues: Tricorn protease (1071 aa).

The tract at residues 39 to 310 (MPNLLLNPDI…EKIEKIEIGD (272 aa)) is six-bladed beta propeller. Residues 131-132 (RR) are binds the substrate's C-terminus. Positions 326 to 675 (AEDFSPLDGD…EDERTVETDK (350 aa)) are seven-bladed beta propeller. Positions 679–745 (VSSIHEEFLQ…VEMQGEYRTS (67 aa)) are C-1; helical bundle. His746 functions as the Charge relay system in the catalytic mechanism. Residues 761–855 (RSGRIACDFK…DLMIDILDDD (95 aa)) form a PDZ-like region. The interval 856 to 1061 (RFIRYRSWVE…IDALIEELRN (206 aa)) is C-2; alpha-beta sandwich. 916 to 918 (GGG) provides a ligand contact to substrate. Ser965 (nucleophile) is an active-site residue. 993–995 (GIT) serves as a coordination point for substrate. Residue Glu1023 is the Charge relay system of the active site.

It belongs to the peptidase S41B family. As to quaternary structure, part of the Tricorn proteolytic complex. Assembles to form a hexameric toroid, 20 copies of which may then assemble to form an icosahedral supermolecule of 14.6 MDa.

It localises to the cytoplasm. Functionally, tricorn degrades oligopeptides (probably derived from the proteasome) and channels the products to F1, F2 and F3 proteases, which then catalyze the terminal degradation step, yielding free amino acids. In Thermoplasma acidophilum (strain ATCC 25905 / DSM 1728 / JCM 9062 / NBRC 15155 / AMRC-C165), this protein is Tricorn protease (tri).